The sequence spans 486 residues: Hematopoietic lineage cell-specific protein (486 aa).

Residues 27–66 are involved in HAX-1 binding; the sequence is FVNDISEKEQRWGAKTIEGSGRTEHINIHQLRNKVSEEHD. Residue Lys-41 is modified to N6-acetyllysine. Cortactin repeat units follow at residues 79 to 115, 116 to 152, and 153 to 189; these read ASHG…SQTD, AAKG…SQKD, and YSRG…SQRD. At Lys-123 the chain carries N6-acetyllysine. Tyr-140 carries the post-translational modification Phosphotyrosine. One copy of the Cortactin 4; truncated repeat lies at 190 to 212; it reads YAKGFGGQYGIQKDRVDKSAVGF. Position 192 is an N6-acetyllysine (Lys-192). A Phosphotyrosine modification is found at Tyr-198. Tyr-222 carries the phosphotyrosine; by FGR modification. Lys-241 is modified (N6-acetyllysine). Over residues 243 to 276 the composition is skewed to basic and acidic residues; sequence ESMAEEKRKREEEEKAQQVARRQQERKAVTKRSP. The tract at residues 243–419 is disordered; it reads ESMAEEKRKR…SALAGSSGCP (177 aa). At Ser-275 the chain carries Phosphoserine. The residue at position 308 (Thr-308) is a Phosphothreonine. Basic and acidic residues predominate over residues 315 to 324; that stretch reads EPVRTSREHP. Acidic residues-rich tracts occupy residues 353–383 and 390–405; these read QVEE…DVEE and EDEP…EPED. Phosphotyrosine; by SYK and FES occurs at positions 378 and 397. Over residues 406–419 the composition is skewed to low complexity; sequence SSFSSALAGSSGCP. The SH3 domain maps to 428–486; that stretch reads ALGISAVAVYDYQGEGSDELSFDPDDVITDIEMVDEGWWRGRCHGHFGLFPANYVKLLE.

As to quaternary structure, associates with the SH2 and SH3 domains of LCK. Binding to he LCK SH3 domain occurs constitutively, while binding to the LCK SH2 domain occurs only upon TCR stimulation. A similar binding pattern was observed with LYN, but not with FYN in which the FYN SH2 region associates upon TCR stimulation but the FYN SH3 region does not associate regardless of TCR stimulation. Directly associates with HAX1, through binding to its C-terminal region. Interacts with HS1BP3. Interacts with FES/FPS. Interacts (via SH2 domain) with FGR. Forms a multiprotein complex with LYN and ANKRD54. Post-translationally, phosphorylated by FES. Phosphorylated by LYN, FYN and FGR after cross-linking of surface IgM on B-cells. Phosphorylation by LYN, FYN and FGR requires prior phosphorylation by SYK or FES. In terms of tissue distribution, expressed only in tissues and cells of hematopoietic origin.

It is found in the membrane. The protein localises to the cytoplasm. The protein resides in the mitochondrion. Its function is as follows. Substrate of the antigen receptor-coupled tyrosine kinase. Plays a role in antigen receptor signaling for both clonal expansion and deletion in lymphoid cells. May also be involved in the regulation of gene expression. This is Hematopoietic lineage cell-specific protein (HCLS1) from Homo sapiens (Human).